The sequence spans 777 residues: Glucocorticoid receptor (777 aa).

The span at 1–14 (MDSKESLTPGKEEN) shows a compositional bias: basic and acidic residues. Residues 1 to 21 (MDSKESLTPGKEENPSSVLTQ) are disordered. Residues 1-420 (MDSKESLTPG…TATTGPPPKL (420 aa)) are modulating. Thr-8 bears the Phosphothreonine mark. Arg-23 is modified (omega-N-methylarginine). 4 positions are modified to phosphoserine: Ser-45, Ser-113, Ser-134, and Ser-141. The segment at 130–182 (NRSTSVPENPKSSASSSVSAAPKEKEFPKTHSDVSSEQQNLKGQTGTNGGNVK) is disordered. The segment covering 134 to 150 (SVPENPKSSASSSVSAA) has biased composition (low complexity). Residues 151–163 (PKEKEFPKTHSDV) are compositionally biased toward basic and acidic residues. Positions 164 to 174 (SSEQQNLKGQT) are enriched in polar residues. Phosphoserine is present on residues Ser-203, Ser-211, and Ser-226. Lys-258 participates in a covalent cross-link: Glycyl lysine isopeptide (Lys-Gly) (interchain with G-Cter in SUMO2). Position 267 is a phosphoserine (Ser-267). Residues Lys-277 and Lys-293 each participate in a glycyl lysine isopeptide (Lys-Gly) (interchain with G-Cter in SUMO); alternate cross-link. Residues Lys-277 and Lys-293 each participate in a glycyl lysine isopeptide (Lys-Gly) (interchain with G-Cter in SUMO2); alternate cross-link. Residues 394 to 414 (SSPSMRPDVSSPPSSSSTATT) show a composition bias toward low complexity. The tract at residues 394-415 (SSPSMRPDVSSPPSSSSTATTG) is disordered. At Ser-404 the chain carries Phosphoserine. A Glycyl lysine isopeptide (Lys-Gly) (interchain with G-Cter in ubiquitin) cross-link involves residue Lys-419. 2 NR C4-type zinc fingers span residues 421–441 (CLVC…CGSC) and 457–481 (CAGR…YRKC). The nuclear receptor DNA-binding region spans 421 to 486 (CLVCSDEASG…RYRKCLQAGM (66 aa)). Lys-480, Lys-492, Lys-494, and Lys-495 each carry N6-acetyllysine. Residues 485 to 777 (GMNLEARKTK…NIKKLLFHQK (293 aa)) are interaction with CLOCK. Residues 487-523 (NLEARKTKKKIKGIQQATTGVSQETSENPANKTIVPA) form a hinge region. The region spanning 524 to 758 (TLPQLTPTLV…FPEMLAEIIT (235 aa)) is the NR LBD domain. The tract at residues 532–697 (LVSLLEVIEP…EIRMTYIKEL (166 aa)) is interaction with CRY1. Lys-703 is covalently cross-linked (Glycyl lysine isopeptide (Lys-Gly) (interchain with G-Cter in SUMO)).

This sequence belongs to the nuclear hormone receptor family. NR3 subfamily. As to quaternary structure, heteromultimeric cytoplasmic complex with HSP90AA1, HSPA1A/HSPA1B, and FKBP5 or another immunophilin such as PPID, STIP1, or the immunophilin homolog PPP5C. Upon ligand binding FKBP5 dissociates from the complex and FKBP4 takes its place, thereby linking the complex to dynein and mediating transport to the nucleus, where the complex dissociates. Probably forms a complex composed of chaperones HSP90 and HSP70, co-chaperones CDC37, PPP5C, TSC1 and client protein TSC2, CDK4, AKT, RAF1 and NR3C1; this complex does not contain co-chaperones STIP1/HOP and PTGES3/p23. Directly interacts with UNC45A. Binds to DNA as a homodimer, and as heterodimer with NR3C2 or the retinoid X receptor. Binds STAT5A and STAT5B homodimers and heterodimers. Interacts with NRIP1, POU2F1, POU2F2 and TRIM28. Interacts with several coactivator complexes, including the SMARCA4 complex, CREBBP/EP300, TADA2L (Ada complex) and p160 coactivators such as NCOA2 and NCOA6. Interaction with BAG1 inhibits transactivation. Interacts with HEXIM1 and TGFB1I1. Interacts with NCOA1. Interacts with NCOA3, SMARCA4, SMARCC1, SMARCD1, and SMARCE1. Interacts with CLOCK, CRY1 and CRY2 in a ligand-dependent fashion. Interacts with CIART. Interacts with RWDD3. Interacts with UBE2I/UBC9 and this interaction is enhanced in the presence of RWDD3. Interacts with GRIP1. Interacts with NR4A3 (via nuclear receptor DNA-binding domain), represses transcription activity of NR4A3 on the POMC promoter Nur response element (NurRE). Directly interacts with PNRC2 to attract and form a complex with UPF1 and DCP1A; the interaction leads to rapid mRNA degradation. Interacts with GSK3B. Interacts with FNIP1 and FNIP2. Interacts (via C-terminus) with HNRNPU (via C-terminus). Interacts with MCM3AP. Interacts (via domain NR LBD) with HSP90AA1 and HSP90AB1. In the absence of hormonal ligand, interacts with TACC1. Interacts (via NR LBD domain) with ZNF764 (via KRAB domain); the interaction regulates transcription factor activity of NR3C1 by directing its actions toward certain biologic pathways. Acetylation by CLOCK reduces its binding to glucocorticoid response elements and its transcriptional activity. Post-translationally, increased proteasome-mediated degradation in response to glucocorticoids. In terms of processing, phosphorylated in the absence of hormone; becomes hyperphosphorylated in the presence of glucocorticoid. The Ser-203, Ser-226 and Ser-404-phosphorylated forms are mainly cytoplasmic, and the Ser-211-phosphorylated form is nuclear. Phosphorylation at Ser-211 increases transcriptional activity. Phosphorylation at Ser-203, Ser-226 and Ser-404 decreases signaling capacity. Phosphorylation at Ser-404 may protect from glucocorticoid-induced apoptosis. Phosphorylation at Ser-203 and Ser-211 is not required in regulation of chromosome segregation. May be dephosphorylated by PPP5C, attenuates NR3C1 action. Ubiquitinated by UBR5, leading to its degradation: UBR5 specifically recognizes and binds ligand-bound NR3C1 when it is not associated with coactivators (NCOAs). In presence of NCOAs, the UBR5-degron is not accessible, preventing its ubiquitination and degradation. Post-translationally, sumoylation at Lys-277 and Lys-293 negatively regulates its transcriptional activity. Sumoylation at Lys-703 positively regulates its transcriptional activity in the presence of RWDD3. Sumoylation at Lys-277 and Lys-293 is dispensable whereas sumoylation at Lys-703 is critical for the stimulatory effect of RWDD3 on its transcriptional activity. Heat shock increases sumoylation in a RWDD3-dependent manner. In terms of tissue distribution, within the infant and adult hippocampal formation, highest expression observed in the DG granule cell layer with moderate levels in the DG hilus, the CA2-CA4 pyramidal cell layer and the proximal part of the CA1 pyramidal cell layer. Moderate to high expression levels found in the presubiculum and in its' superficial layers. Weak but specific expression detected throughout the entire corticle mantle. In the amygdala, moderate levels were detected in the lateral, central and medial nuclei. Moderate expression levels were present in the PVNh alongside the third ventricle.

The protein resides in the cytoplasm. The protein localises to the nucleus. It is found in the mitochondrion. Its subcellular location is the cytoskeleton. It localises to the spindle. The protein resides in the microtubule organizing center. The protein localises to the centrosome. It is found in the chromosome. Its subcellular location is the nucleoplasm. Its function is as follows. Receptor for glucocorticoids (GC). Has a dual mode of action: as a transcription factor that binds to glucocorticoid response elements (GRE), both for nuclear and mitochondrial DNA, and as a modulator of other transcription factors. Affects inflammatory responses, cellular proliferation and differentiation in target tissues. Involved in chromatin remodeling. Plays a role in rapid mRNA degradation by binding to the 5' UTR of target mRNAs and interacting with PNRC2 in a ligand-dependent manner which recruits the RNA helicase UPF1 and the mRNA-decapping enzyme DCP1A, leading to RNA decay. Could act as a coactivator for STAT5-dependent transcription upon growth hormone (GH) stimulation and could reveal an essential role of hepatic GR in the control of body growth. Mediates glucocorticoid-induced apoptosis. Promotes accurate chromosome segregation during mitosis. May act as a tumor suppressor. May play a negative role in adipogenesis through the regulation of lipolytic and antilipogenic gene expression. This Callithrix jacchus (White-tufted-ear marmoset) protein is Glucocorticoid receptor (NR3C1).